The following is a 266-amino-acid chain: GTP cyclohydrolase III (266 aa).

The protein belongs to the archaeal-type GTP cyclohydrolase family.

The enzyme catalyses GTP + 3 H2O = 2-amino-5-formylamino-6-(5-phospho-D-ribosylamino)pyrimidin-4(3H)-one + 2 phosphate + 2 H(+). Its function is as follows. Catalyzes the formation of 2-amino-5-formylamino-6-ribofuranosylamino-4(3H)-pyrimidinone ribonucleotide monophosphate and inorganic phosphate from GTP. Also has an independent pyrophosphate phosphohydrolase activity. The polypeptide is GTP cyclohydrolase III (Methanococcus maripaludis (strain C7 / ATCC BAA-1331)).